Reading from the N-terminus, the 233-residue chain is MLNTPRICVVVIGKTLEEFLSQLEAAQTAVDFVELRIDYLEQINPNWVRIIKNHTQKKAILCCRARADGGKFLGTPEAQQEILQAGNDLGFDYLDIDLPVANKISIHEKKAKIIISYHNFLHTPPITELNFLLENMRLFNPDVFKFATKSEQYEDVKTLFKLLINKKNNENMIVLGMGEQGKIIRLLSPLLGGYLTFSSINGAISAPGQIDFKTMQDFYQRFYKISSPLKGED.

3-dehydroquinate is bound by residues 34 to 36 (ELR) and Arg64. Catalysis depends on His118, which acts as the Proton donor/acceptor. Lys145 functions as the Schiff-base intermediate with substrate in the catalytic mechanism. Residues Arg185, Ser205, and Gln209 each contribute to the 3-dehydroquinate site.

It belongs to the type-I 3-dehydroquinase family. In terms of assembly, homodimer.

The catalysed reaction is 3-dehydroquinate = 3-dehydroshikimate + H2O. The protein operates within metabolic intermediate biosynthesis; chorismate biosynthesis; chorismate from D-erythrose 4-phosphate and phosphoenolpyruvate: step 3/7. Involved in the third step of the chorismate pathway, which leads to the biosynthesis of aromatic amino acids. Catalyzes the cis-dehydration of 3-dehydroquinate (DHQ) and introduces the first double bond of the aromatic ring to yield 3-dehydroshikimate. This Coxiella burnetii (strain CbuK_Q154) (Coxiella burnetii (strain Q154)) protein is 3-dehydroquinate dehydratase.